Here is a 134-residue protein sequence, read N- to C-terminus: Small ribosomal subunit protein uS8 (134 aa).

The protein belongs to the universal ribosomal protein uS8 family. In terms of assembly, part of the 30S ribosomal subunit. Contacts proteins S5 and S12.

Functionally, one of the primary rRNA binding proteins, it binds directly to 16S rRNA central domain where it helps coordinate assembly of the platform of the 30S subunit. This is Small ribosomal subunit protein uS8 from Nitratiruptor sp. (strain SB155-2).